The chain runs to 672 residues: Acetyl-coenzyme A synthetase (672 aa).

CoA-binding positions include 205–208 (RGGK) and T325. ATP is bound by residues 401–403 (GEP), 425–430 (DTYWQT), D516, and R531. S539 contacts CoA. ATP is bound at residue R542. A CoA-binding site is contributed by R600.

Belongs to the ATP-dependent AMP-binding enzyme family.

It catalyses the reaction acetate + ATP + CoA = acetyl-CoA + AMP + diphosphate. The chain is Acetyl-coenzyme A synthetase (facA) from Phycomyces blakesleeanus (strain ATCC 8743b / DSM 1359 / FGSC 10004 / NBRC 33097 / NRRL 1555).